Here is a 254-residue protein sequence, read N- to C-terminus: RNA polymerase sigma-D factor (254 aa).

The Polymerase core binding signature appears at 54-67 (DLMSLGMLGLYDAL). The H-T-H motif DNA-binding region spans 220 to 239 (LTEIGQVLNLSTSRISQIHS).

In terms of assembly, monomer. Interacts transiently with the RNAP core.

In terms of biological role, sigma factors are initiation factors that promote the attachment of RNA polymerase (RNAP) to specific initiation sites and are then released. This alternative sigma factor is required for the transcription of the flagellin and motility genes as well as for wild-type chemotaxis. Associates with the RNAP core during all growth phases with a peak at the transition to stationary phase. This chain is RNA polymerase sigma-D factor (sigD), found in Bacillus subtilis (strain 168).